The following is a 752-amino-acid chain: Photosystem I P700 chlorophyll a apoprotein A1 (752 aa).

The next 8 membrane-spanning stretches (helical) occupy residues 73-96 (IFAAHFGHLAVVTIWLSGMIFHGA), 159-182 (LYCTAIGGLVLAGLFLFAGWFHYH), 198-222 (LNHHLQVLLGCGSLGWAGHLIHVSA), 294-312 (IAHHHLAIAVVFIIAGHQY), 349-372 (WHAQLATNLAFLGSLTIIIAHHMY), 388-414 (LCIFTHHIWIGGFLIVGGAAHAAIFMV), 436-458 (AIISHLNWVCIFLGFHSFGLYIH), and 533-551 (FLIHHIHAFTIHVTVLILL). Positions 575 and 584 each coordinate [4Fe-4S] cluster. The next 2 membrane-spanning stretches (helical) occupy residues 591-612 (HVFLGLFWMYNSLSIVIFHFSW) and 666-688 (LSAYGLMFLGAHFVWAFSLMFLF). Chlorophyll a' is bound at residue histidine 677. Chlorophyll a contacts are provided by methionine 685 and tyrosine 693. Tryptophan 694 contacts phylloquinone. The helical transmembrane segment at 726 to 746 (AVGVAHYLLGGIATTWAFFHA) threads the bilayer.

This sequence belongs to the PsaA/PsaB family. As to quaternary structure, the PsaA/B heterodimer binds the P700 chlorophyll special pair and subsequent electron acceptors. PSI consists of a core antenna complex that captures photons, and an electron transfer chain that converts photonic excitation into a charge separation. The cyanobacterial PSI reaction center is composed of one copy each of PsaA,B,C,D,E,F,I,J,K,L,M and X, and forms trimeric complexes. PSI electron transfer chain: 5 chlorophyll a, 1 chlorophyll a', 2 phylloquinones and 3 4Fe-4S clusters. PSI core antenna: 90 chlorophyll a, 22 carotenoids, 3 phospholipids and 1 galactolipid. P700 is a chlorophyll a/chlorophyll a' dimer, A0 is one or more chlorophyll a, A1 is one or both phylloquinones and FX is a shared 4Fe-4S iron-sulfur center. serves as cofactor.

The protein localises to the cellular thylakoid membrane. The enzyme catalyses reduced [plastocyanin] + hnu + oxidized [2Fe-2S]-[ferredoxin] = oxidized [plastocyanin] + reduced [2Fe-2S]-[ferredoxin]. Functionally, psaA and PsaB bind P700, the primary electron donor of photosystem I (PSI), as well as the electron acceptors A0, A1 and FX. PSI is a plastocyanin/cytochrome c6-ferredoxin oxidoreductase, converting photonic excitation into a charge separation, which transfers an electron from the donor P700 chlorophyll pair to the spectroscopically characterized acceptors A0, A1, FX, FA and FB in turn. Oxidized P700 is reduced on the lumenal side of the thylakoid membrane by plastocyanin or cytochrome c6. This is Photosystem I P700 chlorophyll a apoprotein A1 from Nostoc sp. (strain PCC 7120 / SAG 25.82 / UTEX 2576).